The sequence spans 458 residues: UDP-N-acetylmuramate--L-alanine ligase (458 aa).

118–124 lines the ATP pocket; that stretch reads GTHGKTT.

This sequence belongs to the MurCDEF family.

The protein resides in the cytoplasm. It catalyses the reaction UDP-N-acetyl-alpha-D-muramate + L-alanine + ATP = UDP-N-acetyl-alpha-D-muramoyl-L-alanine + ADP + phosphate + H(+). It functions in the pathway cell wall biogenesis; peptidoglycan biosynthesis. Its function is as follows. Cell wall formation. In Clostridium acetobutylicum (strain ATCC 824 / DSM 792 / JCM 1419 / IAM 19013 / LMG 5710 / NBRC 13948 / NRRL B-527 / VKM B-1787 / 2291 / W), this protein is UDP-N-acetylmuramate--L-alanine ligase.